We begin with the raw amino-acid sequence, 450 residues long: Signal recognition particle 54 kDa protein (450 aa).

GTP-binding positions include Gly-107–Thr-114, Asp-188–Arg-192, and Thr-247–Asp-250.

It belongs to the GTP-binding SRP family. SRP54 subfamily. As to quaternary structure, part of the signal recognition particle protein translocation system, which is composed of SRP and FtsY. Archaeal SRP consists of a 7S RNA molecule of 300 nucleotides and two protein subunits: SRP54 and SRP19.

It is found in the cytoplasm. The catalysed reaction is GTP + H2O = GDP + phosphate + H(+). Involved in targeting and insertion of nascent membrane proteins into the cytoplasmic membrane. Binds to the hydrophobic signal sequence of the ribosome-nascent chain (RNC) as it emerges from the ribosomes. The SRP-RNC complex is then targeted to the cytoplasmic membrane where it interacts with the SRP receptor FtsY. The polypeptide is Signal recognition particle 54 kDa protein (Methanococcus vannielii (strain ATCC 35089 / DSM 1224 / JCM 13029 / OCM 148 / SB)).